Reading from the N-terminus, the 74-residue chain is U4-theraphotoxin-Cg1a (74 aa).

Positions 1–19 (MNATIFAFLLLLNLAMHNA) are cleaved as a signal peptide. Positions 20–39 (TEQSSETDMDDTLLIPEINR) are excised as a propeptide. Disulfide bonds link cysteine 42-cysteine 56, cysteine 49-cysteine 61, and cysteine 55-cysteine 71.

Belongs to the neurotoxin 36 family. 01 subfamily. Expressed by the venom gland.

Its subcellular location is the secreted. Functionally, probable ion channel inhibitor. The chain is U4-theraphotoxin-Cg1a from Chilobrachys guangxiensis (Chinese earth tiger tarantula).